The primary structure comprises 1118 residues: Cytospin-A (1118 aa).

Disordered stretches follow at residues 1-157 and 198-221; these read MKKS…DGQI and GGKE…PHVS. Polar residues-rich tracts occupy residues 57–102 and 112–123; these read NPTS…TKET and SRASANKKQSAA. Over residues 144-153 the composition is skewed to basic and acidic residues; that stretch reads SESRMSKSKS. Residues 204-215 show a composition bias toward acidic residues; the sequence is EGPEEEEEEEEE. The stretch at 225-264 forms a coiled coil; it reads AADVESTLILLQEQNQAIREELNLLKSENRMLKDRLNALG. The segment at 289–379 is disordered; sequence AGSGQSDGGG…RRGSSGNASE (91 aa). Residues 343–363 show a composition bias toward low complexity; that stretch reads SSDDALDAPSGASSSSESECA. Coiled-coil stretches lie at residues 384-438 and 475-796; these read CLTE…MDSL and GRYM…RGRV. Disordered stretches follow at residues 771-790, 837-876, and 920-1001; these read QEKN…RKQD, FDSA…PPAA, and SAAS…ERKD. Residues 838-855 are compositionally biased toward polar residues; the sequence is DSASQGPPSNGASVTPTV. The segment covering 861 to 872 has biased composition (pro residues); it reads PRTPLSPSPMKT. Residues 930–945 show a composition bias toward polar residues; it reads QRVSNMDSTKTISVSR. Residues 946 to 956 are compositionally biased toward basic and acidic residues; the sequence is RSSEEMKRDMS. The segment covering 961-986 has biased composition (low complexity); that stretch reads ASSTSLMAMSAASAPLSLSSSSPTAS. In terms of domain architecture, Calponin-homology (CH) spans 1012 to 1117; that stretch reads GSKRNALLKW…YVTAIYKYFE (106 aa).

Belongs to the cytospin-A family. May interact with both microtubules and actin cytoskeleton.

It localises to the cytoplasm. It is found in the cytoskeleton. The protein localises to the spindle. Its subcellular location is the cell junction. The protein resides in the gap junction. Functionally, involved in cytokinesis and spindle organization. May play a role in actin cytoskeleton organization and microtubule stabilization and hence required for proper cell adhesion and migration. The protein is Cytospin-A (specc1l) of Takifugu rubripes (Japanese pufferfish).